A 191-amino-acid polypeptide reads, in one-letter code: Surfactant protein C (191 aa).

Positions 1–23 (MDVGSKEVLMESPPDYSAAPRGR) are excised as a propeptide. S-palmitoyl cysteine attachment occurs at residues cysteine 28 and cysteine 29. A propeptide spanning residues 59 to 191 (HMSQKHTEMV…LCGEVPLYYI (133 aa)) is cleaved from the precursor. Residues 94-191 (FSFGSTGLVV…LCGEVPLYYI (98 aa)) form the BRICHOS domain. The cysteines at positions 121 and 183 are disulfide-linked.

The protein localises to the secreted. It localises to the extracellular space. It is found in the surface film. In terms of biological role, pulmonary surfactant associated proteins promote alveolar stability by lowering the surface tension at the air-liquid interface in the peripheral air spaces. The protein is Surfactant protein C (SFTPC) of Macaca mulatta (Rhesus macaque).